We begin with the raw amino-acid sequence, 556 residues long: Mitochondrial distribution and morphology protein 34-2 (556 aa).

In terms of domain architecture, SMP-LTD spans 1–195; the sequence is MAFNFNWSPL…LPAIIHRLSL (195 aa). 3 disordered regions span residues 206-239, 299-423, and 440-473; these read EEMN…DSLG, TDTS…PVTP, and HLPS…DATP. Residues 299 to 333 show a composition bias toward polar residues; that stretch reads TDTSEFPSSVISPLSPTLSREQSQMGSMSSLHETA. Over residues 334–357 the composition is skewed to low complexity; it reads SNASMQSRPSMSSHSFSTSTYGLS. Over residues 362–374 the composition is skewed to basic residues; it reads RHSKAHARKRKKR. Basic and acidic residues predominate over residues 375-385; that stretch reads VVDLRRPKTTD. Residues 391–402 are compositionally biased toward polar residues; sequence SDESVMTESSRP. Positions 459 to 468 are enriched in basic and acidic residues; that stretch reads ETIRGPKAED.

This sequence belongs to the MDM34 family. In terms of assembly, component of the ER-mitochondria encounter structure (ERMES) or MDM complex, composed of mmm1, mdm10, mdm12 and mdm34.

The protein localises to the mitochondrion outer membrane. Its function is as follows. Component of the ERMES/MDM complex, which serves as a molecular tether to connect the endoplasmic reticulum (ER) and mitochondria. Components of this complex are involved in the control of mitochondrial shape and protein biogenesis, and function in nonvesicular lipid trafficking between the ER and mitochondria. Mdm34 is required for the interaction of the ER-resident membrane protein mmm1 and the outer mitochondrial membrane-resident beta-barrel protein mdm10. This is Mitochondrial distribution and morphology protein 34-2 from Penicillium rubens (strain ATCC 28089 / DSM 1075 / NRRL 1951 / Wisconsin 54-1255) (Penicillium chrysogenum).